The following is a 215-amino-acid chain: Interleukin-12 subunit alpha (215 aa).

The signal sequence occupies residues 1–22 (MCSSRCLLFLATLAFLIHLSLA). Intrachain disulfides connect C33–C106, C60–C192, and C81–C119. N-linked (GlcNAc...) asparagine glycosylation occurs at N89.

It belongs to the IL-6 superfamily. In terms of assembly, heterodimer with IL12B; disulfide-linked. This heterodimer is known as interleukin IL-12. Heterodimer with EBI3/IL27B; not disulfide-linked. This heterodimer is known as interleukin IL-35. Interacts with NBR1; this interaction promotes IL-12 secretion.

It is found in the secreted. In terms of biological role, heterodimerizes with IL12B to form the IL-12 cytokine or with EBI3/IL27B to form the IL-35 cytokine. IL-12 is primarily produced by professional antigen-presenting cells (APCs) such as B-cells and dendritic cells (DCs) as well as macrophages and granulocytes and regulates T-cell and natural killer-cell responses, induces the production of interferon-gamma (IFN-gamma), favors the differentiation of T-helper 1 (Th1) cells and is an important link between innate resistance and adaptive immunity. Mechanistically, exerts its biological effects through a receptor composed of IL12R1 and IL12R2 subunits. Binding to the receptor results in the rapid tyrosine phosphorylation of a number of cellular substrates including the JAK family kinases TYK2 and JAK2. In turn, recruited STAT4 gets phosphorylated and translocates to the nucleus where it regulates cytokine/growth factor responsive genes. As part of IL-35, plays essential roles in maintaining the immune homeostasis of the liver microenvironment and also functions as an immune-suppressive cytokine. Mediates biological events through unconventional receptors composed of IL12RB2 and gp130/IL6ST heterodimers or homodimers. Signaling requires the transcription factors STAT1 and STAT4, which form a unique heterodimer that binds to distinct DNA sites. The sequence is that of Interleukin-12 subunit alpha (IL12A) from Sigmodon hispidus (Hispid cotton rat).